Reading from the N-terminus, the 133-residue chain is Nickel-responsive regulator (133 aa).

Ni(2+) contacts are provided by His-76, His-87, His-89, and Cys-95.

It belongs to the transcriptional regulatory CopG/NikR family. In terms of assembly, homotetramer. The cofactor is Ni(2+).

In terms of biological role, transcriptional repressor of the nikABCDE operon. Is active in the presence of excessive concentrations of intracellular nickel. This is Nickel-responsive regulator from Shigella dysenteriae serotype 1 (strain Sd197).